Here is an 893-residue protein sequence, read N- to C-terminus: DNA gyrase subunit A (893 aa).

The Topo IIA-type catalytic domain maps to 35-501 (LPDVRDGLKP…GLEDLEDEDL (467 aa)). The O-(5'-phospho-DNA)-tyrosine intermediate role is filled by Tyr-123. The short motif at 528–534 (QNRGGRG) is the GyrA-box element. The segment at 810-893 (VNEEDDNEEN…ASDNEEDSDE (84 aa)) is disordered. 2 stretches are compositionally biased toward acidic residues: residues 812–821 (EEDDNEENAD) and 852–862 (DAEMESVESPE). A compositionally biased stretch (basic and acidic residues) spans 863 to 879 (NDDRIDIRQDFMDRVNE). The segment covering 880 to 893 (DIESASDNEEDSDE) has biased composition (acidic residues).

Belongs to the type II topoisomerase GyrA/ParC subunit family. Heterotetramer, composed of two GyrA and two GyrB chains. In the heterotetramer, GyrA contains the active site tyrosine that forms a transient covalent intermediate with DNA, while GyrB binds cofactors and catalyzes ATP hydrolysis.

The protein resides in the cytoplasm. It catalyses the reaction ATP-dependent breakage, passage and rejoining of double-stranded DNA.. A type II topoisomerase that negatively supercoils closed circular double-stranded (ds) DNA in an ATP-dependent manner to modulate DNA topology and maintain chromosomes in an underwound state. Negative supercoiling favors strand separation, and DNA replication, transcription, recombination and repair, all of which involve strand separation. Also able to catalyze the interconversion of other topological isomers of dsDNA rings, including catenanes and knotted rings. Type II topoisomerases break and join 2 DNA strands simultaneously in an ATP-dependent manner. The polypeptide is DNA gyrase subunit A (Staphylococcus epidermidis (strain ATCC 12228 / FDA PCI 1200)).